We begin with the raw amino-acid sequence, 452 residues long: MPGSEMPAPCVFAPDMAEQVPLWHHYLLAIQSRESPRVQDYQRAENILLTVLERVHALDSRFIVDYSRDLEAFQFALRSSEDPLDVEVLLGVDSEALLIEESEATEPGDGPAICRLGVLKEASGLEPWMTADIFSVSSEDRDKCCGHLVPSKVLCVLKDLLVAAIVHCKHHRLIPPGSLNAANLKEGQMRLSLLVSSGWRKIRFNVVPVVRKKHRVPALEGAQLKLGFPEGILRRIASHGVDLVPANAQHWRISTGYLLSRLLDALGSLPGHRLDSLSILDRVNLESWQGGSQNHGLTFDHLKTVLLWASTLFPAPEDWADLQGSVYRQLVVLLCCLATRKLPHFLYPEHNLLQDGGLDLGAIYQRVEHFASQPEESLRIHVTHLGPSRPPRIDNGVKALLQLPASDPTYWATAYFDFLLDKFQVFNIQDKDRISAMQNIFQKTKTMGSENS.

This is Protein mab-21-like 4 (Mab21l4) from Mus musculus (Mouse).